The chain runs to 404 residues: Snake venom metalloproteinase H5 (404 aa).

Residues 1–6 (FPYQGS) form the signal peptide. A propeptide spanning residues 7–177 (SIMLESGKVN…KPSWVNLTPK (171 aa)) is cleaved from the precursor. A Peptidase M12B domain is found at 184-379 (TSVNLQLVVD…KKPKCIHKKS (196 aa)). Intrachain disulfides connect C295-C374, C336-C358, and C338-C341. Residue H320 participates in Zn(2+) binding. E321 is a catalytic residue. Zn(2+) is bound by residues H324 and H330. The propeptide occupies 379 to 404 (SLKTDTVSTSVSGNEPLDDNVDGFHA). The segment at 385–404 (VSTSVSGNEPLDDNVDGFHA) is disordered. Residues 394–404 (PLDDNVDGFHA) are compositionally biased toward acidic residues.

As to quaternary structure, monomer. Zn(2+) serves as cofactor. As to expression, expressed by the venom gland.

It localises to the secreted. In terms of biological role, this probable venom zinc protease is not hemorrhagic when 3 ug are injected onto the back skin of guinea pig. The polypeptide is Snake venom metalloproteinase H5 (Deinagkistrodon acutus (Hundred-pace snake)).